A 316-amino-acid chain; its full sequence is L-lactate dehydrogenase (316 aa).

Residues V15, D37, K42, Y68, and G82–L83 each bind NAD(+). Substrate is bound by residues Q85, R91, and N123–D126. Residues A121 to N123 and T146 each bind NAD(+). D151 to R154 is a substrate binding site. Residues R156 and H171 each contribute to the beta-D-fructose 1,6-bisphosphate site. H178 functions as the Proton acceptor in the catalytic mechanism. Position 222 is a phosphotyrosine (Y222). T231 contributes to the substrate binding site.

This sequence belongs to the LDH/MDH superfamily. LDH family. Homotetramer.

It localises to the cytoplasm. The enzyme catalyses (S)-lactate + NAD(+) = pyruvate + NADH + H(+). The protein operates within fermentation; pyruvate fermentation to lactate; (S)-lactate from pyruvate: step 1/1. Its activity is regulated as follows. Allosterically activated by fructose 1,6-bisphosphate (FBP). Its function is as follows. Catalyzes the conversion of lactate to pyruvate. The protein is L-lactate dehydrogenase of Borrelia turicatae (strain 91E135).